Consider the following 438-residue polypeptide: DNA primase DnaG (438 aa).

In terms of domain architecture, Toprim spans 169-243; the sequence is DSIIVVEGRA…DIDYVARAPY (75 aa). E175, D217, and D219 together coordinate Mg(2+).

It belongs to the archaeal DnaG primase family. Forms a ternary complex with MCM helicase and DNA. Requires Mg(2+) as cofactor.

The enzyme catalyses ssDNA + n NTP = ssDNA/pppN(pN)n-1 hybrid + (n-1) diphosphate.. RNA polymerase that catalyzes the synthesis of short RNA molecules used as primers for DNA polymerase during DNA replication. The polypeptide is DNA primase DnaG (Methanococcus maripaludis (strain C6 / ATCC BAA-1332)).